We begin with the raw amino-acid sequence, 354 residues long: Protein RecA (354 aa).

75-82 contacts ATP; it reads GPESSGKT.

Belongs to the RecA family.

It is found in the cytoplasm. Its function is as follows. Can catalyze the hydrolysis of ATP in the presence of single-stranded DNA, the ATP-dependent uptake of single-stranded DNA by duplex DNA, and the ATP-dependent hybridization of homologous single-stranded DNAs. It interacts with LexA causing its activation and leading to its autocatalytic cleavage. This chain is Protein RecA, found in Cupriavidus taiwanensis (strain DSM 17343 / BCRC 17206 / CCUG 44338 / CIP 107171 / LMG 19424 / R1) (Ralstonia taiwanensis (strain LMG 19424)).